The primary structure comprises 268 residues: Small ribosomal subunit protein uS3 (268 aa).

The 69-residue stretch at 39–107 (VREYLKKKLK…PVHVNIEEIR (69 aa)) folds into the KH type-2 domain. Residues 216-268 (VEEVAEEKRPRRNARPGGDRRPRRDGEGGGPAGARRGAPRRAGGAGGDGKTGE) are disordered. Over residues 232 to 242 (GGDRRPRRDGE) the composition is skewed to basic and acidic residues. A compositionally biased stretch (low complexity) spans 248 to 257 (GARRGAPRRA). Residues 258-268 (GGAGGDGKTGE) are compositionally biased toward gly residues.

Belongs to the universal ribosomal protein uS3 family. In terms of assembly, part of the 30S ribosomal subunit. Forms a tight complex with proteins S10 and S14.

Its function is as follows. Binds the lower part of the 30S subunit head. Binds mRNA in the 70S ribosome, positioning it for translation. This is Small ribosomal subunit protein uS3 from Paraburkholderia phytofirmans (strain DSM 17436 / LMG 22146 / PsJN) (Burkholderia phytofirmans).